The primary structure comprises 213 residues: Thymidylate kinase (213 aa).

G9–T16 is a binding site for ATP.

It belongs to the thymidylate kinase family.

The catalysed reaction is dTMP + ATP = dTDP + ADP. Phosphorylation of dTMP to form dTDP in both de novo and salvage pathways of dTTP synthesis. This is Thymidylate kinase from Geobacter sulfurreducens (strain ATCC 51573 / DSM 12127 / PCA).